An 816-amino-acid chain; its full sequence is Endo-acting ulvan lyase (816 aa).

An N-terminal signal peptide occupies residues 1-23 (MGTSVRRISVVLMMLFGTNFCWS).

The protein belongs to the polysaccharide lyase family.

It localises to the cell surface. Its subcellular location is the periplasm. In terms of biological role, ulvan lyase involved in ulvan degradation. Ulvan is the main polysaccharide component of the Ulvales (green seaweed) cell wall. It is composed of disaccharide building blocks comprising 3-sulfated rhamnose (Rha3S) linked to D-glucuronic acid (GlcA), L-iduronic acid (IduA), or D-xylose (Xyl). Ulvan lyase catalyzes the endolytic cleavage of the glycosidic bond between Rha3S and the uronic acids GlcA or IduA, producing oligosaccharides that have unsaturated 4-deoxy-L-threo-hex-4-enopyranosiduronic acid (deltaUA) at the non-reducing end. This results eventually in the degradation of the ulvan polysaccharide into deltaUA-Rha3S disaccharides and deltaUA-Rha3S-Xyl-Rha3S tetrasaccharides. This Formosa agariphila (strain DSM 15362 / KCTC 12365 / LMG 23005 / KMM 3901 / M-2Alg 35-1) protein is Endo-acting ulvan lyase.